A 198-amino-acid chain; its full sequence is CASP-like protein 1U1 (198 aa).

At 1 to 30 (MSDTPVVVIPRKGYVDGHHGYHHSYHSGLN) the chain is on the cytoplasmic side. Residues 31–51 (LLLRLLQAFATAAAVIVMLLA) traverse the membrane as a helical segment. Topologically, residues 52–73 (TQTEFTRYGEVRGRWRDYPAYK) are extracellular. The helical transmembrane segment at 74-94 (WFIIANAVVFVYALLATLVAC) threads the bilayer. Topologically, residues 95-117 (CALIARRGPLSYSPSAWLTFLLD) are cytoplasmic. A helical membrane pass occupies residues 118–138 (FVAASALMSAASAALAVALIA). Over 139–165 (RNGQNLQGQHYWPTFCNYVTRFCDYAQ) the chain is Extracellular. Residues 166-186 (GAIIASFCGFGLLALSTLLAA) traverse the membrane as a helical segment. Topologically, residues 187–198 (SALHHLAWHRLH) are cytoplasmic.

Belongs to the Casparian strip membrane proteins (CASP) family. Homodimer and heterodimers.

The protein resides in the cell membrane. The chain is CASP-like protein 1U1 from Physcomitrium patens (Spreading-leaved earth moss).